A 457-amino-acid chain; its full sequence is Protein translocase subunit SecY (457 aa).

The Cytoplasmic segment spans residues 1-20; that stretch reads MGVIDVLAAVGERFPAVRKP. Residues 21–47 form a helical membrane-spanning segment; sequence ERKPTLYRRLAWTGVILVLYFIMSNIP. At 48-59 the chain is on the extracellular side; that stretch reads LYGIPPQNIGGQ. Positions 60-67 form an intramembrane region, helical; it reads VDLQRIIF. The chain crosses the membrane as a discontinuously helical span at residues 60–88; it reads VDLQRIIFASSAGTLMELGIGPIVTASLI. The stretch at 68 to 79 is an intramembrane region; the sequence is ASSAGTLMELGI. Positions 80–88 form an intramembrane region, helical; it reads GPIVTASLI. Residues 89–109 lie on the Cytoplasmic side of the membrane; sequence IQVLVGAKIIKLDLADPEGRR. Residues 110–134 form a helical membrane-spanning segment; that stretch reads KFTSAQKVLALAFAALEAVAFTVGG. The Extracellular portion of the chain corresponds to 135–146; sequence RYWVGTAIEPGP. A helical membrane pass occupies residues 147–171; that stretch reads LDYALVSLQLFLGALLVIYFDEVMQ. Residues 172 to 178 are Cytoplasmic-facing; the sequence is KGWGIGS. The helical transmembrane segment at 179-197 threads the bilayer; it reads AISLFILAGVAQGVVWSIF. The Extracellular portion of the chain corresponds to 198–229; the sequence is GTIPGVAQDYGLVPAIISNPDLTLLARPNGFP. Residues 230-251 traverse the membrane as a helical segment; the sequence is DLTGFFTTLAAIILLVYLQAMR. At 252 to 276 the chain is on the cytoplasmic side; the sequence is VEIPITSERFKGIRSRVPLQFIYVT. A helical membrane pass occupies residues 277 to 298; the sequence is NIPILLVGILVSDLLLVQRLLA. At 299–332 the chain is on the extracellular side; the sequence is DYLGVESRAYQIYSSIVYYLSPPRGVVQSIADPV. The chain crosses the membrane as a helical span at residues 333 to 352; that stretch reads KTAVFIASWTVLSIVFGYMW. Over 353 to 395 the chain is Cytoplasmic; that stretch reads VEIAGLNPREQAERLIKGGLAIPGMRSDPRVLERVLRRYIYPL. The chain crosses the membrane as a helical span at residues 396-414; the sequence is TFLSSLIVAALVIVADIFG. At 415 to 417 the chain is on the extracellular side; the sequence is AYG. The chain crosses the membrane as a helical span at residues 418–432; the sequence is TGTGLLLAVGIINQY. Topologically, residues 433–457 are cytoplasmic; the sequence is YAMITRERALETYPLLRRILGEEVV.

Belongs to the SecY/SEC61-alpha family. Component of the Sec protein translocase complex. Heterotrimer consisting of alpha (SecY), beta (SecG) and gamma (SecE) subunits. The heterotrimers can form oligomers, although 1 heterotrimer is thought to be able to translocate proteins. Interacts with the ribosome. May interact with SecDF, and other proteins may be involved.

The protein resides in the cell membrane. Functionally, the central subunit of the protein translocation channel SecYEG. Consists of two halves formed by TMs 1-5 and 6-10. These two domains form a lateral gate at the front which open onto the bilayer between TMs 2 and 7, and are clamped together by SecE at the back. The channel is closed by both a pore ring composed of hydrophobic SecY resides and a short helix (helix 2A) on the extracellular side of the membrane which forms a plug. The plug probably moves laterally to allow the channel to open. The ring and the pore may move independently. In Aeropyrum pernix (strain ATCC 700893 / DSM 11879 / JCM 9820 / NBRC 100138 / K1), this protein is Protein translocase subunit SecY.